The chain runs to 921 residues: MAPLALVGVTLLLAAPPCSGAATPTPSLPPPPANDSDTSTGGCQGSYRCQPGVLLPVWEPDDPSLGDKAARAVVYFVAMVYMFLGVSIIADRFMAAIEVITSKEKEITITKANGETSVGTVRIWNETVSNLTLMALGSSAPEILLSVIEVCGHNFQAGELGPGTIVGSAAFNMFVVIAVCIYVIPAGESRKIKHLRVFFVTASWSIFAYVWLYLILAVFSPGVVQVWEALLTLVFFPVCVVFAWMADKRLLFYKYVYKRYRTDPRSGIIIGAEGDPPKSIELDGTFVGAEAPGELGGLGPGPAEARELDASRREVIQILKDLKQKHPDKDLEQLVGIANYYALLHQQKSRAFYRIQATRLMTGAGNVLRRHAADASRRAAPAEGAGEDEDDGASRIFFEPSLYHCLENCGSVLLSVTCQGGEGNSTFYVDYRTEDGSAKAGSDYEYSEGTLVFKPGETQKELRIGIIDDDIFEEDEHFFVRLLNLRVGDAQGMFEPDGGGRPKGRLVAPLLATVTILDDDHAGIFSFQDRLLHVSECMGTVDVRVVRSSGARGTVRLPYRTVDGTARGGGVHYEDACGELEFGDDETMKTLQVKIVDDEEYEKKDNFFIELGQPQWLKRGISALLLNQGDGDRKLTAEEEEARRIAEMGKPVLGENCRLEVIIEESYDFKNTVDKLIKKTNLALVIGTHSWREQFLEAITVSAGDEEEEEDGSREERLPSCFDYVMHFLTVFWKVLFACVPPTEYCHGWACFGVSILVIGLLTALIGDLASHFGCTVGLKDSVNAVVFVALGTSIPDTFASKVAALQDQCADASIGNVTGSNAVNVFLGLGVAWSVAAVYWAVQGRPFEVRTGTLAFSVTLFTVFAFVGIAVLLYRRRPHIGGELGGPRGPKLATTALFLGLWLLYILFASLEAYCHIRGF.

A signal peptide spans 1–20 (MAPLALVGVTLLLAAPPCSG). The Extracellular segment spans residues 21-68 (AATPTPSLPPPPANDSDTSTGGCQGSYRCQPGVLLPVWEPDDPSLGDK). Residues 22–42 (ATPTPSLPPPPANDSDTSTGG) are disordered. N-linked (GlcNAc...) asparagine glycosylation is present at N34. Residues 69 to 90 (AARAVVYFVAMVYMFLGVSIIA) form a helical membrane-spanning segment. The Cytoplasmic segment spans residues 91-130 (DRFMAAIEVITSKEKEITITKANGETSVGTVRIWNETVSN). A helical transmembrane segment spans residues 131-152 (LTLMALGSSAPEILLSVIEVCG). Residues 135–175 (ALGSSAPEILLSVIEVCGHNFQAGELGPGTIVGSAAFNMFV) form an Alpha-1 repeat. Over 153–164 (HNFQAGELGPGT) the chain is Extracellular. The chain crosses the membrane as a helical span at residues 165 to 185 (IVGSAAFNMFVVIAVCIYVIP). The Cytoplasmic segment spans residues 186–196 (AGESRKIKHLR). Residues 197–219 (VFFVTASWSIFAYVWLYLILAVF) traverse the membrane as a helical segment. Residues 220-222 (SPG) are Extracellular-facing. Residues 223-246 (VVQVWEALLTLVFFPVCVVFAWMA) traverse the membrane as a helical segment. The Cytoplasmic segment spans residues 247 to 720 (DKRLLFYKYV…DGSREERLPS (474 aa)). The putative calmodulin-binding region stretch occupies residues 248–267 (KRLLFYKYVYKRYRTDPRSG). Calx-beta domains lie at 384–483 (GAGE…VRLL) and 512–612 (ATVT…IELG). Ca(2+)-binding residues include E407, D443, D468, D469, I471, E473, E476, D518, D519, D520, E536, D598, E599, and E600. Phosphoserine is present on S622. E665 lines the Ca(2+) pocket. The chain crosses the membrane as a helical span at residues 721-740 (CFDYVMHFLTVFWKVLFACV). Residues 741 to 747 (PPTEYCH) are Extracellular-facing. Residues 748-770 (GWACFGVSILVIGLLTALIGDLA) form a helical membrane-spanning segment. Over 771–772 (SH) the chain is Cytoplasmic. A helical membrane pass occupies residues 773–791 (FGCTVGLKDSVNAVVFVAL). The Alpha-2 repeat unit spans residues 790–826 (ALGTSIPDTFASKVAALQDQCADASIGNVTGSNAVNV). The Extracellular segment spans residues 792–822 (GTSIPDTFASKVAALQDQCADASIGNVTGSN). An N-linked (GlcNAc...) asparagine glycan is attached at N817. Residues 823 to 843 (AVNVFLGLGVAWSVAAVYWAV) form a helical membrane-spanning segment. Topologically, residues 844–854 (QGRPFEVRTGT) are cytoplasmic. Residues 855–875 (LAFSVTLFTVFAFVGIAVLLY) traverse the membrane as a helical segment. Topologically, residues 876 to 892 (RRRPHIGGELGGPRGPK) are extracellular. The helical transmembrane segment at 893-909 (LATTALFLGLWLLYILF) threads the bilayer. At 910 to 921 (ASLEAYCHIRGF) the chain is on the cytoplasmic side.

Belongs to the Ca(2+):cation antiporter (CaCA) (TC 2.A.19) family. SLC8 subfamily.

Its subcellular location is the cell membrane. It localises to the basolateral cell membrane. The protein resides in the perikaryon. The protein localises to the cell projection. It is found in the dendrite. Its subcellular location is the dendritic spine. It carries out the reaction Ca(2+)(in) + 3 Na(+)(out) = Ca(2+)(out) + 3 Na(+)(in). With respect to regulation, calcium transport is down-regulated by Na(+) and stimulated by Ca(2+). In terms of biological role, mediates the electrogenic exchange of Ca(2+) against Na(+) ions across the cell membrane, and thereby contributes to the regulation of cytoplasmic Ca(2+) levels and Ca(2+)-dependent cellular processes. Contributes to cellular Ca(2+) homeostasis in excitable cells. Contributes to the rapid decrease of cytoplasmic Ca(2+) levels back to baseline after neuronal activation, and thereby contributes to modulate synaptic plasticity, learning and memory. Plays a role in regulating urinary Ca(2+) and Na(+) excretion. The protein is Sodium/calcium exchanger 2 (SLC8A2) of Homo sapiens (Human).